We begin with the raw amino-acid sequence, 295 residues long: Protoheme IX farnesyltransferase 2 (295 aa).

9 consecutive transmembrane segments (helical) span residues 9–29 (ITKPGIIFGNVLSVAGGFFLA), 36–56 (LAVFLAAMIGTSLVVASGCVF), 80–100 (LISLKLALVYATVLGVAGVAL), 108–128 (LAALFAVIGFIIYVGFYSLYL), 135–155 (GTLVGSLSGAMPPVIGYVAVT), 163–183 (LTLLVMFSLWQMPHSYAIAIF), 209–229 (ILIYILAFLVATLMLTFSGYA), 230–250 (GMSYLAVAAAMGMYWLYMAWT), and 265–285 (FVFSIFTITALSVMMSLDFKV).

It belongs to the UbiA prenyltransferase family. Protoheme IX farnesyltransferase subfamily.

The protein localises to the cell inner membrane. The catalysed reaction is heme b + (2E,6E)-farnesyl diphosphate + H2O = Fe(II)-heme o + diphosphate. It participates in porphyrin-containing compound metabolism; heme O biosynthesis; heme O from protoheme: step 1/1. Functionally, converts heme B (protoheme IX) to heme O by substitution of the vinyl group on carbon 2 of heme B porphyrin ring with a hydroxyethyl farnesyl side group. This chain is Protoheme IX farnesyltransferase 2, found in Pseudomonas fluorescens (strain Pf0-1).